Consider the following 355-residue polypeptide: Homeobox protein knotted-1-like 12 (355 aa).

Disordered regions lie at residues 52 to 82 and 207 to 233; these read AAGP…GGGE and ECVG…PRAE. Basic residues predominate over residues 60–75; it reads GHGHPHHGGGHHHSKH. Residues 218 to 233 are compositionally biased toward basic and acidic residues; it reads PSGRENEPPEIDPRAE. One can recognise an ELK domain in the interval 236–256; sequence ELKFQLLKKYSGYLSSLRQEF. Positions 257–320 form a DNA-binding region, homeobox; TALE-type; it reads SKKKKKGKLP…NQRKRHWKPS (64 aa).

It belongs to the TALE/KNOX homeobox family. As to expression, expressed in stems, rachis and inflorescence.

Its subcellular location is the nucleus. Probable transcription factor that may be involved in shoot formation during embryogenesis. This is Homeobox protein knotted-1-like 12 (OSH15) from Oryza sativa subsp. japonica (Rice).